The primary structure comprises 303 residues: Phenoloxidase-activating factor 2 (303 aa).

The segment at 1–24 (PDRRPPEDPITPPPPTKEEQRAGC) is disordered. Residues 36 to 292 (IIGDKDGEAK…LRDWIDDKVA (257 aa)) enclose the Peptidase S1 domain. Cystine bridges form between cysteine 173/cysteine 247, cysteine 206/cysteine 227, and cysteine 237/cysteine 268.

It belongs to the peptidase S1 family. Heterodimer.

It is found in the secreted. Binds and activates processed prophenoloxidases PPO1 and PPO2 and thus is involved in the activation of the prophenoloxidase cascade probably following the recognition of pathogen-derived products. Binds the A.niger cell wall component alpha-1,3-glucan, a fungal pathogen-associated molecular pattern (PAMP) that activates the host immune response. The protein is Phenoloxidase-activating factor 2 (LOC113510063) of Galleria mellonella (Greater wax moth).